The primary structure comprises 100 residues: Bombyxin A-2 homolog (100 aa).

An N-terminal signal peptide occupies residues 1 to 18; sequence MRTQVLFLIVVLAVMASG. Disulfide bonds link Cys26–Cys85, Cys38–Cys98, and Cys84–Cys89. A propeptide spans 47–75 (c peptide like); it reads PPYISSENEGYGWKWLERQRARQLDEARG.

Belongs to the insulin family. As to quaternary structure, heterodimer of a B chain and an A chain linked by two disulfide bonds.

The protein localises to the secreted. Brain peptide responsible for activation of prothoracic glands to produce ecdysone in insects. The polypeptide is Bombyxin A-2 homolog (SBXA2) (Samia cynthia (Ailanthus silkmoth)).